The primary structure comprises 114 residues: Iron-sulfur cluster insertion protein ErpA (114 aa).

Iron-sulfur cluster contacts are provided by Cys-42, Cys-106, and Cys-108.

Belongs to the HesB/IscA family. In terms of assembly, homodimer. It depends on iron-sulfur cluster as a cofactor.

Functionally, required for insertion of 4Fe-4S clusters for at least IspG. This Haemophilus influenzae (strain PittEE) protein is Iron-sulfur cluster insertion protein ErpA.